The following is a 544-amino-acid chain: Methionine--tRNA ligase (544 aa).

Positions 10-20 (PYANGSLHLGH) match the 'HIGH' region motif. Zn(2+)-binding residues include Cys-141, Cys-144, Cys-153, and Cys-156. Positions 329-333 (KLSTS) match the 'KMSKS' region motif. Thr-332 lines the ATP pocket.

This sequence belongs to the class-I aminoacyl-tRNA synthetase family. MetG type 1 subfamily. In terms of assembly, monomer. The cofactor is Zn(2+).

The protein resides in the cytoplasm. The catalysed reaction is tRNA(Met) + L-methionine + ATP = L-methionyl-tRNA(Met) + AMP + diphosphate. In terms of biological role, is required not only for elongation of protein synthesis but also for the initiation of all mRNA translation through initiator tRNA(fMet) aminoacylation. The chain is Methionine--tRNA ligase from Bacillus cereus (strain G9842).